We begin with the raw amino-acid sequence, 519 residues long: Circadian clock oscillator protein KaiC 1 (519 aa).

2 consecutive KaiC domains span residues Met-1–Phe-248 and Ala-262–Glu-519. Gly-50, Thr-51, Gly-52, Lys-53, Thr-54, Leu-55, Ser-90, Lys-225, Leu-226, Arg-227, Thr-229, His-231, Thr-241, Thr-291, Gly-292, Thr-293, Gly-294, Lys-295, Thr-296, and Leu-297 together coordinate ATP. A Mg(2+)-binding site is contributed by Thr-54. Thr-296 contributes to the Mg(2+) binding site. Glu-319 is a Mg(2+) binding site. Residue Trp-332 coordinates ATP. The residue at position 432 (Ser-432) is a Phosphoserine; by autocatalysis. At Thr-433 the chain carries Phosphothreonine; by autocatalysis. Residues Arg-452, Lys-458, Met-459, Arg-460, Ser-462, His-464, and Lys-466 each contribute to the ATP site.

It belongs to the KaiC family. As to quaternary structure, homohexamer; hexamerization is dependent on ATP-binding. Core component of the KaiABC complex, at least composed of a KaiC homohexamer, a KaiB dimer and two KaiA dimers. Interacts directly with SasA. Multimerizes, probably forming homohexamers, no interaction with KaiC2 or KaiC3 is seen. Interacts with KaiA. In another study interacts with itself, KaiB1, KaiB3 and KaiC3. Interacts with SasA (hik8). It depends on Mg(2+) as a cofactor. Phosphorylated on serine and threonine residues by autocatalysis. Has a 4 step phosphorylation cycle; the autokinase acts first on Thr-433, then Ser-432. When Ser-432 is modified KaiC switches to an autophosphatase mode, acting first on phospho-Thr-433 then phospho-Ser-432.

It carries out the reaction L-seryl-[protein] + ATP = O-phospho-L-seryl-[protein] + ADP + H(+). It catalyses the reaction L-threonyl-[protein] + ATP = O-phospho-L-threonyl-[protein] + ADP + H(+). The enzyme catalyses ATP + H2O = ADP + phosphate + H(+). The interaction with KaiA enhances its phosphorylation status, while the interaction with KaiB decreases it. Functionally, component of the oscillator and circadian clock in this organism, enhances fitness in a rhythmic environment. Autophosphorylates in the presence of KaiA, no activity is seen in its absence. Central component of the KaiABC oscillator complex, which constitutes the main circadian regulator in cyanobacteria. Complex composition changes during the circadian cycle to control KaiC phosphorylation. KaiA stimulates KaiC autophosphorylation, while KaiB sequesters KaiA, leading to KaiC autodephosphorylation. Clock output pathways impact the RpaA transcriptional regulator. KaiC enhances the autophosphorylation activity of SasA, which then transfers its phosphate group to RpaA to activate it. KaiB and KaiC together enhance the phospho-RpaA dephosphatase activity of CikA. Its function is as follows. Has a weak, temperature-independent ATPase activity; ATPase activity defines the circadian period. The phosphorylation state of KaiC modulates its ATPase activity and effects KaiB binding. The sequence is that of Circadian clock oscillator protein KaiC 1 from Synechocystis sp. (strain ATCC 27184 / PCC 6803 / Kazusa).